The following is a 391-amino-acid chain: Secreted aspartic protease 1 (391 aa).

A signal peptide spans 1–18 (MFLKNIFIALAIALLVDA). The propeptide at 19–50 (SPAKRSPGFVTLDFDVIKTPVNATGQEGKVKR) is activation peptide. N40 carries N-linked (GlcNAc...) asparagine glycosylation. Residues 64 to 377 (YAADITIGSN…DLDDDKISLA (314 aa)) form the Peptidase A1 domain. Residue D82 is part of the active site. 82 to 84 (DTG) contacts pepstatin A. A disulfide bridge connects residues C97 and C109. Zn(2+)-binding residues include D241 and D263. D267 is an active-site residue. 267 to 271 (DSGTT) is a binding site for pepstatin A. Cysteines 305 and 343 form a disulfide.

It belongs to the peptidase A1 family. In terms of assembly, monomer.

Its subcellular location is the secreted. It carries out the reaction Preferential cleavage at the carboxyl of hydrophobic amino acids, but fails to cleave 15-Leu-|-Tyr-16, 16-Tyr-|-Leu-17 and 24-Phe-|-Phe-25 of insulin B chain. Activates trypsinogen, and degrades keratin.. Inhibited by pepstatin A analogs and squash aspartic peptidase inhibitor (SQAPI). In terms of biological role, secreted aspartic peptidases (SAPs) are a group of ten acidic hydrolases considered as key virulence factors. These enzymes supply the fungus with nutrient amino acids as well as are able to degrade the selected host's proteins involved in the immune defense. Induces host inflammatory cytokine production in a proteolytic activity-independent way. Plays a role in tissue damage during superficial infection. Moreover, acts toward human hemoglobin though limited proteolysis to generate a variety of antimicrobial hemocidins, enabling to compete with the other microorganisms of the same physiological niche using the microbicidal peptides generated from the host protein. Functionally, plays a key role in defense against host by cleaving histatin-5 (Hst 5), a peptide from human saliva that carries out fungicidal activity. The cleavage rate decreases in an order of SAP2 &gt; SAP9 &gt; SAP3 &gt; SAP7 &gt; SAP4 &gt; SAP1 &gt; SAP8. The first cleavage occurs between residues 'Lys-17' and 'His-18' of Hst 5, giving DSHAKRHHGYKRKFHEK and HHSHRGY peptides. Further fragmentation by SAP1 results in AKRHHGYKRKFHEK and AKRHHGY products. The chain is Secreted aspartic protease 1 from Candida albicans (Yeast).